A 727-amino-acid chain; its full sequence is E3 ubiquitin-protein ligase LRSAM1 (727 aa).

LRR repeat units follow at residues 30–51 (ADDILDISKCELSEIPFGAFAT), 56–77 (QKKVLIVHTNHLTSLLPKSCSL), 82–103 (TIKVLDLHENQLTALPDDMGQL), 105–126 (VLQVLNVERNQLTHLPRSIGNL), 128–150 (QLQTLNVKDNKLKELPDTLGELR), and 151–172 (SLRTLDISENEIQRLPQMLAHV). Residues 227–248 (GAENTQDSPDGPASRFSREEAE) form a disordered region. Serine 234 is modified (phosphoserine). 2 coiled-coil regions span residues 241 to 382 (RFSR…NLRQ) and 469 to 547 (RQIR…QENY). Residues 569–632 (GMERRLVALL…LRRAQDLLAV (64 aa)) form the SAM domain. At serine 604 the chain carries Phosphoserine. Short sequence motifs (PTAP motif) lie at residues 653 to 656 (PTAP) and 665 to 668 (PSAP). The RING-type zinc-finger motif lies at 679-714 (CVVCLEREAQMVFLTCGHVCCCQQCCQPLRTCPLCR).

Interacts with TSG101. Interacts with PHF23. Interacts with FUS. Post-translationally, ubiquitination promoted by PHF23 leads to proteasomal degradation. Widely expressed.

It localises to the cytoplasm. The catalysed reaction is S-ubiquitinyl-[E2 ubiquitin-conjugating enzyme]-L-cysteine + [acceptor protein]-L-lysine = [E2 ubiquitin-conjugating enzyme]-L-cysteine + N(6)-ubiquitinyl-[acceptor protein]-L-lysine.. Its pathway is protein modification; protein ubiquitination. E3 ubiquitin-protein ligase that mediates monoubiquitination of TSG101 at multiple sites, leading to inactivate the ability of TSG101 to sort endocytic (EGF receptors) and exocytic (viral proteins) cargos. Bacterial recognition protein that defends the cytoplasm from invasive pathogens. Localizes to several intracellular bacterial pathogens and generates the bacteria-associated ubiquitin signal leading to autophagy-mediated intracellular bacteria degradation (xenophagy). The protein is E3 ubiquitin-protein ligase LRSAM1 of Mus musculus (Mouse).